Reading from the N-terminus, the 104-residue chain is Translation initiation factor 1A (104 aa).

A compositionally biased stretch (low complexity) spans 1 to 14; that stretch reads MRGQQAPPQQPTRV. The segment at 1 to 20 is disordered; the sequence is MRGQQAPPQQPTRVRTPREN. The S1-like domain occupies 12 to 87; sequence TRVRTPRENE…EKCDVIWRYT (76 aa).

It belongs to the eIF-1A family.

Functionally, seems to be required for maximal rate of protein biosynthesis. Enhances ribosome dissociation into subunits and stabilizes the binding of the initiator Met-tRNA(I) to 40 S ribosomal subunits. In Methanococcus maripaludis (strain C6 / ATCC BAA-1332), this protein is Translation initiation factor 1A (eIF1A).